We begin with the raw amino-acid sequence, 346 residues long: S-adenosylmethionine:tRNA ribosyltransferase-isomerase (346 aa).

The protein belongs to the QueA family. Monomer.

Its subcellular location is the cytoplasm. The enzyme catalyses 7-aminomethyl-7-carbaguanosine(34) in tRNA + S-adenosyl-L-methionine = epoxyqueuosine(34) in tRNA + adenine + L-methionine + 2 H(+). Its pathway is tRNA modification; tRNA-queuosine biosynthesis. Transfers and isomerizes the ribose moiety from AdoMet to the 7-aminomethyl group of 7-deazaguanine (preQ1-tRNA) to give epoxyqueuosine (oQ-tRNA). This Borreliella afzelii (strain PKo) (Borrelia afzelii) protein is S-adenosylmethionine:tRNA ribosyltransferase-isomerase.